The chain runs to 65 residues: Small ribosomal subunit protein bS21 (65 aa).

This sequence belongs to the bacterial ribosomal protein bS21 family.

This is Small ribosomal subunit protein bS21 from Chlorobaculum parvum (strain DSM 263 / NCIMB 8327) (Chlorobium vibrioforme subsp. thiosulfatophilum).